We begin with the raw amino-acid sequence, 157 residues long: uncharacterized protein (157 aa).

Belongs to the mimivirus L242/L243 family.

This is an uncharacterized protein from Acanthamoeba polyphaga (Amoeba).